The chain runs to 263 residues: Small ribosomal subunit protein eS4 (263 aa).

Positions 42–104 (LPLIIFLRNR…TGEHFRLVYD (63 aa)) constitute an S4 RNA-binding domain.

The protein belongs to the eukaryotic ribosomal protein eS4 family.

The polypeptide is Small ribosomal subunit protein eS4 (RPS4) (Gallus gallus (Chicken)).